Reading from the N-terminus, the 43-residue chain is METGILVVIFISCLLVSFTGYTIYTAFGQPSKQLRDPFEEHED.

Residues 4–24 (GILVVIFISCLLVSFTGYTIY) traverse the membrane as a helical segment.

The protein belongs to the PsbN family.

The protein localises to the plastid. Its subcellular location is the chloroplast thylakoid membrane. May play a role in photosystem I and II biogenesis. The chain is Protein PsbN from Chaetosphaeridium globosum (Charophycean green alga).